The sequence spans 307 residues: MLNFTDVTEFILLGLTSRREWQVLFFIIFLVVYIITMVGNIGMMVLIKVSPQLNNPMYFFLSHLSFVDVWFSSNVTPKMLENLLSDKKTITYAGCLVQCFFFIALVHVEIFILAAMAFDRYMAIGNPLLYGSKMSRVVCIRLITFPYIYGFLTSLAATLWTYGLYFCGKIEINHFYCADPPLIKMACAGTFVKEYTMIILAGINFTYSLTVIIISYLFILIAILRMRSAEGRQKAFSTCGSHLTAVIIFYGTLIFMYLRRPTEESVEQGKMVAVFYTTVIPMLNPMIYSLRNKDVKKAMMKVISRSC.

The Extracellular segment spans residues Met-1–Val-23. Asn-3 carries N-linked (GlcNAc...) asparagine glycosylation. Residues Leu-24–Met-44 form a helical membrane-spanning segment. Over Val-45–Gln-52 the chain is Cytoplasmic. Residues Leu-53–Ser-73 traverse the membrane as a helical segment. Residues Asn-74–Val-97 are Extracellular-facing. An intrachain disulfide couples Cys-95 to Cys-187. The chain crosses the membrane as a helical span at residues Gln-98–Phe-118. Residues Asp-119–Val-137 are Cytoplasmic-facing. Residues Val-138–Thr-158 form a helical membrane-spanning segment. Residues Leu-159 to Glu-194 lie on the Extracellular side of the membrane. A helical transmembrane segment spans residues Tyr-195–Ser-215. At Tyr-216–Ala-235 the chain is on the cytoplasmic side. The chain crosses the membrane as a helical span at residues Phe-236–Met-256. Topologically, residues Tyr-257–Gly-269 are extracellular. A helical transmembrane segment spans residues Lys-270–Leu-290. At Arg-291–Cys-307 the chain is on the cytoplasmic side.

This sequence belongs to the G-protein coupled receptor 1 family.

It is found in the cell membrane. Functionally, odorant receptor. The polypeptide is Olfactory receptor 5M3 (OR5M3) (Homo sapiens (Human)).